Reading from the N-terminus, the 401-residue chain is S-adenosylmethionine synthase (401 aa).

H15 lines the ATP pocket. D17 is a binding site for Mg(2+). E43 is a binding site for K(+). E56 and Q99 together coordinate L-methionine. A flexible loop region spans residues 99–109; sequence QSPEIGAGVDT. The tract at residues 101–132 is disordered; that stretch reads PEIGAGVDTSHEVRGSSSTDEDDRQGAGDQGL. ATP-binding positions include 174 to 176, D254, 260 to 261, A277, and K281; these read DGK and RK. D254 contacts L-methionine. An L-methionine-binding site is contributed by K285.

It belongs to the AdoMet synthase family. As to quaternary structure, homotetramer; dimer of dimers. Mg(2+) serves as cofactor. Requires K(+) as cofactor.

It is found in the cytoplasm. It catalyses the reaction L-methionine + ATP + H2O = S-adenosyl-L-methionine + phosphate + diphosphate. It functions in the pathway amino-acid biosynthesis; S-adenosyl-L-methionine biosynthesis; S-adenosyl-L-methionine from L-methionine: step 1/1. Functionally, catalyzes the formation of S-adenosylmethionine (AdoMet) from methionine and ATP. The overall synthetic reaction is composed of two sequential steps, AdoMet formation and the subsequent tripolyphosphate hydrolysis which occurs prior to release of AdoMet from the enzyme. The protein is S-adenosylmethionine synthase of Corynebacterium urealyticum (strain ATCC 43042 / DSM 7109).